We begin with the raw amino-acid sequence, 394 residues long: Elongation factor Tu (394 aa).

The tr-type G domain occupies 10–204 (KPHINVGTIG…YLDTYIPEPK (195 aa)). Positions 19 to 26 (GHVDHGKT) are G1. 19 to 26 (GHVDHGKT) provides a ligand contact to GTP. Mg(2+) is bound at residue T26. Residues 60-64 (GITIN) form a G2 region. The G3 stretch occupies residues 81 to 84 (DCPG). GTP-binding positions include 81–85 (DCPGH) and 136–139 (NKCD). Residues 136-139 (NKCD) form a G4 region. The G5 stretch occupies residues 174–176 (SAL).

The protein belongs to the TRAFAC class translation factor GTPase superfamily. Classic translation factor GTPase family. EF-Tu/EF-1A subfamily. As to quaternary structure, monomer.

It localises to the cytoplasm. The enzyme catalyses GTP + H2O = GDP + phosphate + H(+). Functionally, GTP hydrolase that promotes the GTP-dependent binding of aminoacyl-tRNA to the A-site of ribosomes during protein biosynthesis. The polypeptide is Elongation factor Tu (Buchnera aphidicola subsp. Baizongia pistaciae (strain Bp)).